Here is a 507-residue protein sequence, read N- to C-terminus: E3 SUMO-protein ligase PIAS4 (507 aa).

Alanine 2 carries the N-acetylalanine modification. Residue lysine 9 forms a Glycyl lysine isopeptide (Lys-Gly) (interchain with G-Cter in SUMO2) linkage. The region spanning 12-46 is the SAP domain; that stretch reads VMSFRVSDLQMLLGFVGRSKSGLKHELVTRALQLV. The LXXLL motif motif lies at 20–24; sequence LQMLL. A Glycyl lysine isopeptide (Lys-Gly) (interchain with G-Cter in SUMO); alternate cross-link involves residue lysine 35. Lysine 35 is covalently cross-linked (Glycyl lysine isopeptide (Lys-Gly) (interchain with G-Cter in SUMO2); alternate). Residues lysine 56, lysine 59, lysine 68, and lysine 69 each participate in a glycyl lysine isopeptide (Lys-Gly) (interchain with G-Cter in SUMO2) cross-link. Lysine 107 carries the N6-acetyllysine modification. Positions 112-272 constitute a PINIT domain; sequence LGRLPTKTLK…SVALYLVRQL (161 aa). Residue lysine 118 forms a Glycyl lysine isopeptide (Lys-Gly) (interchain with G-Cter in SUMO2) linkage. A Glycyl lysine isopeptide (Lys-Gly) (interchain with G-Cter in SUMO) cross-link involves residue lysine 128. The SP-RING-type zinc finger occupies 304–385; it reads PDSEIATTGV…LSKILSECEG (82 aa). The Zn(2+) site is built by cysteine 335, histidine 337, cysteine 358, and cysteine 361. Positions 426–507 are disordered; it reads APASSTPGIG…PFQKGLVPAC (82 aa). The segment covering 434–450 has biased composition (gly residues); that stretch reads IGSGLSGPGSAGSGAGA. Residues 474–489 show a composition bias toward acidic residues; the sequence is SEDEDEDEDDDEDEDE.

This sequence belongs to the PIAS family. In terms of assembly, interacts with AR, GATA2, LEF1, TP53 and STAT1 (IFNG-induced). Interacts with TICAM1. Interacts with MTA1. Interacts with PRDM1/Blimp-1. Interacts with TRIM32 upon treatment with UVB and TNF-alpha. As to quaternary structure, (Microbial infection) Interacts ewith Moloney murine leukemia virus Capsid protein p30. Post-translationally, sumoylated. Lys-35 is the main site of sumoylation. Sumoylation is required for TCF4 sumoylation and transcriptional activation. Represses LEF1 transcriptional activity. SUMO1 is the preferred conjugate. In terms of processing, ubiquitinated by TRIM32 upon treatment with UVB and TNF-alpha. In terms of tissue distribution, widely expressed, with highest levels in testis. Also expressed in vascular endothelial cells, in primary keratinocytes and in the CNS, including cortex, olfactory bulb, spinal cord, thalamus and trigeminal ganglion. Low expression, if any, in liver and lung.

The protein localises to the nucleus. It localises to the PML body. It catalyses the reaction S-ubiquitinyl-[E2 ubiquitin-conjugating enzyme]-L-cysteine + [acceptor protein]-L-lysine = [E2 ubiquitin-conjugating enzyme]-L-cysteine + N(6)-ubiquitinyl-[acceptor protein]-L-lysine.. It participates in protein modification; protein sumoylation. Functions as an E3-type small ubiquitin-like modifier (SUMO) ligase, stabilizing the interaction between UBE2I and the substrate, and as a SUMO-tethering factor. Mediates sumoylation of ALKBH5, AXIN1, CEBPA, KLF8, GATA2, PARK7, HERC2, MYB, TCF4 and RNF168. Plays a crucial role as a transcriptional coregulation in various cellular pathways, including the STAT pathway, the p53/TP53 pathway, the Wnt pathway and the steroid hormone signaling pathway. Involved in gene silencing. In Wnt signaling, represses LEF1 and enhances TCF4 transcriptional activities through promoting their sumoylations. Enhances the sumoylation of MTA1 and may participate in its paralog-selective sumoylation. Binds to AT-rich DNA sequences, known as matrix or scaffold attachment regions (MARs/SARs). Catalyzes conjugation of SUMO2 to KAT5 in response to DNA damage, facilitating repair of DNA double-strand breaks (DSBs) via homologous recombination (HR). Mediates sumoylation of PARP1 in response to PARP1 trapping to chromatin. Mediates sumoylation of KLF8, repressiing KLF8 transcriptional activity and cell cycle progression into G(1) phase. Sumoylates ALKBH5 downstream of MAPK8/JNK1 and MAPK9/JNK2 in response to reactive oxygen species (ROS), inhibiting ALKBH5 RNA demethylase activity. The sequence is that of E3 SUMO-protein ligase PIAS4 (Pias4) from Mus musculus (Mouse).